A 133-amino-acid chain; its full sequence is uncharacterized protein (133 aa).

A helical transmembrane segment spans residues 36–56 (LPMLIALACIFLLLATCLLFM). The interval 105-133 (HGRPTVPRQPLPGPEDNRSHCDYMESTKM) is disordered. Positions 119 to 133 (EDNRSHCDYMESTKM) are enriched in basic and acidic residues.

The protein resides in the membrane. This is an uncharacterized protein from Homo sapiens (Human).